The chain runs to 577 residues: Aspartate--tRNA ligase (577 aa).

E171 provides a ligand contact to L-aspartate. Residues Q195–K198 form an aspartate region. An L-aspartate-binding site is contributed by R217. ATP-binding positions include R217 to E219 and Q226. Residue H437 coordinates L-aspartate. E472 is a binding site for ATP. Residue R479 participates in L-aspartate binding. G524 to R527 serves as a coordination point for ATP.

This sequence belongs to the class-II aminoacyl-tRNA synthetase family. Type 1 subfamily. Homodimer.

The protein localises to the cytoplasm. It catalyses the reaction tRNA(Asp) + L-aspartate + ATP = L-aspartyl-tRNA(Asp) + AMP + diphosphate. Its function is as follows. Catalyzes the attachment of L-aspartate to tRNA(Asp) in a two-step reaction: L-aspartate is first activated by ATP to form Asp-AMP and then transferred to the acceptor end of tRNA(Asp). This chain is Aspartate--tRNA ligase, found in Deinococcus deserti (strain DSM 17065 / CIP 109153 / LMG 22923 / VCD115).